Consider the following 394-residue polypeptide: Elongation factor Tu 1 (394 aa).

In terms of domain architecture, tr-type G spans 9–204; sequence KPHCNIGTIG…AIDDYIPQPT (196 aa). Residues 18-25 form a G1 region; the sequence is GHVDHGKT. 18 to 25 contacts GTP; the sequence is GHVDHGKT. Residue T25 participates in Mg(2+) binding. Residues 61 to 65 form a G2 region; sequence GITIQ. Residues 82 to 85 are G3; that stretch reads DCPG. GTP is bound by residues 82–86 and 137–140; these read DCPGH and NKID. The tract at residues 137-140 is G4; the sequence is NKID. The interval 174 to 176 is G5; it reads SAL.

It belongs to the TRAFAC class translation factor GTPase superfamily. Classic translation factor GTPase family. EF-Tu/EF-1A subfamily. As to quaternary structure, monomer.

It is found in the cytoplasm. It carries out the reaction GTP + H2O = GDP + phosphate + H(+). Its function is as follows. GTP hydrolase that promotes the GTP-dependent binding of aminoacyl-tRNA to the A-site of ribosomes during protein biosynthesis. This chain is Elongation factor Tu 1, found in Orientia tsutsugamushi (strain Boryong) (Rickettsia tsutsugamushi).